The following is a 262-amino-acid chain: 14-3-3-like protein A (262 aa).

A disordered region spans residues 240–262 (DNAEEGGDEIKEAASKPEGEGHS). The span at 247 to 262 (DEIKEAASKPEGEGHS) shows a compositional bias: basic and acidic residues.

This sequence belongs to the 14-3-3 family.

The protein is 14-3-3-like protein A of Hordeum vulgare (Barley).